Here is a 154-residue protein sequence, read N- to C-terminus: Transcriptional repressor NrdR (154 aa).

A zinc finger lies at C3 to C34. Residues L46–D136 form the ATP-cone domain.

The protein belongs to the NrdR family. Zn(2+) serves as cofactor.

Its function is as follows. Negatively regulates transcription of bacterial ribonucleotide reductase nrd genes and operons by binding to NrdR-boxes. The polypeptide is Transcriptional repressor NrdR (Mycolicibacterium vanbaalenii (strain DSM 7251 / JCM 13017 / BCRC 16820 / KCTC 9966 / NRRL B-24157 / PYR-1) (Mycobacterium vanbaalenii)).